The primary structure comprises 175 residues: Endoribonuclease YbeY (175 aa).

Zn(2+) contacts are provided by His129, His133, and His139.

Belongs to the endoribonuclease YbeY family. It depends on Zn(2+) as a cofactor.

The protein resides in the cytoplasm. Single strand-specific metallo-endoribonuclease involved in late-stage 70S ribosome quality control and in maturation of the 3' terminus of the 16S rRNA. This chain is Endoribonuclease YbeY, found in Lactobacillus gasseri (strain ATCC 33323 / DSM 20243 / BCRC 14619 / CIP 102991 / JCM 1131 / KCTC 3163 / NCIMB 11718 / NCTC 13722 / AM63).